A 75-amino-acid polypeptide reads, in one-letter code: Penaeidin-3k (75 aa).

Positions 1-19 (MRLVVCLVFLASFALVCQG) are cleaved as a signal peptide. At Gln20 the chain carries Pyrrolidone carboxylic acid. 3 disulfides stabilise this stretch: Cys44–Cys59, Cys48–Cys66, and Cys60–Cys67. Ser74 is modified (serine amide).

It belongs to the penaeidin family.

The protein localises to the cytoplasmic granule. Its function is as follows. Antibacterial and antifungal activity. Presents chitin-binding activity. The protein is Penaeidin-3k of Penaeus setiferus (Atlantic white shrimp).